The sequence spans 418 residues: Gamma-glutamyl phosphate reductase (418 aa).

The protein belongs to the gamma-glutamyl phosphate reductase family.

Its subcellular location is the cytoplasm. It catalyses the reaction L-glutamate 5-semialdehyde + phosphate + NADP(+) = L-glutamyl 5-phosphate + NADPH + H(+). The protein operates within amino-acid biosynthesis; L-proline biosynthesis; L-glutamate 5-semialdehyde from L-glutamate: step 2/2. Its function is as follows. Catalyzes the NADPH-dependent reduction of L-glutamate 5-phosphate into L-glutamate 5-semialdehyde and phosphate. The product spontaneously undergoes cyclization to form 1-pyrroline-5-carboxylate. This chain is Gamma-glutamyl phosphate reductase, found in Aliivibrio fischeri (strain MJ11) (Vibrio fischeri).